Here is a 90-residue protein sequence, read N- to C-terminus: Essential MCU regulator, mitochondrial (90 aa).

Topologically, residues 1-48 (MVLSRLNPIVKQCVLGNRPNLVSLGPVRTAVYSKSGGLLPEPHRTSFG) are mitochondrial matrix. The helical transmembrane segment at 49 to 76 (IIRLILTVVPGLLIGAAISKNIANFLEE) threads the bilayer. Residues 77-90 (NDLFVPSDDDDDDD) lie on the Mitochondrial intermembrane side of the membrane.

Belongs to the SMDT1/EMRE family. As to quaternary structure, component of the uniplex complex, composed of MCU, EMRE, MICU1 and MICU2 in a 4:4:1:1 stoichiometry.

It localises to the mitochondrion inner membrane. Functionally, essential regulatory subunit of the mitochondrial calcium uniporter complex (uniplex), a complex that mediates calcium uptake into mitochondria. Required to bridge the calcium-sensing proteins MICU1 with the calcium-conducting subunit MCU. Acts by mediating activation of MCU and retention of MICU1 to the MCU pore, in order to ensure tight regulation of the uniplex complex and appropriate responses to intracellular calcium signaling. The protein is Essential MCU regulator, mitochondrial (EMRE) of Tribolium castaneum (Red flour beetle).